We begin with the raw amino-acid sequence, 312 residues long: MNKTVRIGTRGSKLALWQAEHVAACLQTKGLEPQIVIIDTTGDKILDQSLSKIGSKGLFTEELEEQLHAGTIDIAVHSAKDLQTHLKGGMYILAITERELVNDVLVSHKPIDTLKNNPDLIIGTSSTRRRALLRKFYPQAKMVDMRGNLQTRIRKMEEGACDAMLLAYAGMHRMGYDSLIKEKLSLEEFIPAAGQGTLAIEAASTLDKEKAAVIRAVLNDAATETAVSAERAFLRTLEGGCSIPVFALAVERDTDYLLTGGIVSLDGTKYLRKEIRFTAADAEQRGVELATVLLKDGADEILAEIKKGLSKS.

Residue cysteine 241 is modified to S-(dipyrrolylmethanemethyl)cysteine.

This sequence belongs to the HMBS family. As to quaternary structure, monomer. Dipyrromethane is required as a cofactor.

It carries out the reaction 4 porphobilinogen + H2O = hydroxymethylbilane + 4 NH4(+). It participates in porphyrin-containing compound metabolism; protoporphyrin-IX biosynthesis; coproporphyrinogen-III from 5-aminolevulinate: step 2/4. In terms of biological role, tetrapolymerization of the monopyrrole PBG into the hydroxymethylbilane pre-uroporphyrinogen in several discrete steps. This chain is Porphobilinogen deaminase, found in Cytophaga hutchinsonii (strain ATCC 33406 / DSM 1761 / CIP 103989 / NBRC 15051 / NCIMB 9469 / D465).